Consider the following 313-residue polypeptide: Porphobilinogen deaminase (313 aa).

At cysteine 242 the chain carries S-(dipyrrolylmethanemethyl)cysteine.

This sequence belongs to the HMBS family. Monomer. It depends on dipyrromethane as a cofactor.

The enzyme catalyses 4 porphobilinogen + H2O = hydroxymethylbilane + 4 NH4(+). The protein operates within porphyrin-containing compound metabolism; protoporphyrin-IX biosynthesis; coproporphyrinogen-III from 5-aminolevulinate: step 2/4. Functionally, tetrapolymerization of the monopyrrole PBG into the hydroxymethylbilane pre-uroporphyrinogen in several discrete steps. The protein is Porphobilinogen deaminase of Escherichia coli O7:K1 (strain IAI39 / ExPEC).